Consider the following 693-residue polypeptide: Polyribonucleotide nucleotidyltransferase (693 aa).

2 residues coordinate Mg(2+): D489 and D495. Positions 556–615 (PQIHVMNINPAKIKDVVGRGGATVKGIVEKTGAQIDTSDSGEVKVFAKDKKSMDMAVAMI) constitute a KH domain. Positions 625–693 (GQVYKGKIVK…GRVKLSLVAR (69 aa)) constitute an S1 motif domain.

Belongs to the polyribonucleotide nucleotidyltransferase family. As to quaternary structure, component of the RNA degradosome, which is a multiprotein complex involved in RNA processing and mRNA degradation. Mg(2+) serves as cofactor.

It localises to the cytoplasm. It carries out the reaction RNA(n+1) + phosphate = RNA(n) + a ribonucleoside 5'-diphosphate. Involved in mRNA degradation. Catalyzes the phosphorolysis of single-stranded polyribonucleotides processively in the 3'- to 5'-direction. The polypeptide is Polyribonucleotide nucleotidyltransferase (Francisella tularensis subsp. tularensis (strain WY96-3418)).